The primary structure comprises 218 residues: Embryonic polyadenylate-binding protein 2-B (218 aa).

Disordered regions lie at residues Met-1–Asp-24 and Arg-169–Tyr-218. Residues Arg-93–Thr-170 form the RRM domain. A compositionally biased stretch (basic residues) spans Gln-198 to Gly-209.

Homodimer; Upon poly(A) binding, undergoes a dimer-monomer transition that removes the polyproline motif from the RNA recognition site and allows it to be replaced by the adenosine nucleotides of poly(A).

The protein localises to the cytoplasm. Its function is as follows. Binds the poly(A) tail of mRNA. Unable to interact with the cap-binding complex and is therefore unlikely to be involved in translation initiation. The protein is Embryonic polyadenylate-binding protein 2-B (Pabpn1l-b) of Xenopus laevis (African clawed frog).